The chain runs to 457 residues: Cysteine--tRNA ligase (457 aa).

Residue Cys-28 coordinates Zn(2+). The short motif at 30–40 (PTVYDTAHIGN) is the 'HIGH' region element. Zn(2+) contacts are provided by Cys-212, His-237, and Glu-241. Residues 270–274 (KMSKS) carry the 'KMSKS' region motif. Lys-273 contributes to the ATP binding site.

The protein belongs to the class-I aminoacyl-tRNA synthetase family. As to quaternary structure, monomer. Zn(2+) serves as cofactor.

It localises to the cytoplasm. It catalyses the reaction tRNA(Cys) + L-cysteine + ATP = L-cysteinyl-tRNA(Cys) + AMP + diphosphate. The sequence is that of Cysteine--tRNA ligase from Wolbachia sp. subsp. Drosophila simulans (strain wRi).